Reading from the N-terminus, the 310-residue chain is Putative S-adenosyl-L-methionine-dependent methyltransferase MUL_4763 (310 aa).

S-adenosyl-L-methionine is bound by residues Asp137 and 166 to 167 (DL).

The protein belongs to the UPF0677 family.

Exhibits S-adenosyl-L-methionine-dependent methyltransferase activity. This chain is Putative S-adenosyl-L-methionine-dependent methyltransferase MUL_4763, found in Mycobacterium ulcerans (strain Agy99).